Here is a 176-residue protein sequence, read N- to C-terminus: CASP-like protein 5A1 (176 aa).

Over 1 to 45 (MDASHPAVYPVGVPPTAVDPPPRVRMKDYEGMPSTLGGLVLRSGQ) the chain is Cytoplasmic. Residues 46 to 66 (FACAVTALSIMISIPDFSSVT) traverse the membrane as a helical segment. Residue Ala-67 is a topological domain, extracellular. The helical transmembrane segment at 68–88 (FCYLVAAMALQLLWSVSLAVV) threads the bilayer. The Cytoplasmic portion of the chain corresponds to 89 to 102 (DGYALLLRRTLHNP). Residues 103-123 (VLLSLLVIGDWVTSTLSLAAA) form a helical membrane-spanning segment. At 124-151 (CSSAGITVLIDSDLAQCAHNHCGRYEAA) the chain is on the extracellular side. The chain crosses the membrane as a helical span at residues 152–172 (VAMAFLTWFLVSLSFFFSFWL). Residues 173 to 176 (LATR) lie on the Cytoplasmic side of the membrane.

It belongs to the Casparian strip membrane proteins (CASP) family. In terms of assembly, homodimer and heterodimers.

The protein resides in the cell membrane. The protein is CASP-like protein 5A1 of Selaginella moellendorffii (Spikemoss).